The sequence spans 176 residues: N-alpha-acetyltransferase NAT5 (176 aa).

An N-acetyltransferase domain is found at 14 to 176; it reads NNLGMLTKLA…DAILLKKHIS (163 aa).

This sequence belongs to the acetyltransferase family. As to quaternary structure, component of the N-terminal acetyltransferase A (NatA) complex, which is composed of ARD1, NAT1 and NAT5.

The protein resides in the cytoplasm. The enzyme catalyses N-terminal L-methionyl-L-alanyl-[protein] + acetyl-CoA = N-terminal N(alpha)-acetyl-L-methionyl-L-alanyl-[protein] + CoA + H(+). It catalyses the reaction N-terminal L-methionyl-L-seryl-[protein] + acetyl-CoA = N-terminal N(alpha)-acetyl-L-methionyl-L-seryl-[protein] + CoA + H(+). It carries out the reaction N-terminal L-methionyl-L-valyl-[protein] + acetyl-CoA = N-terminal N(alpha)-acetyl-L-methionyl-L-valyl-[protein] + CoA + H(+). The catalysed reaction is N-terminal L-methionyl-L-threonyl-[protein] + acetyl-CoA = N-terminal N(alpha)-acetyl-L-methionyl-L-threonyl-[protein] + CoA + H(+). The enzyme catalyses N-terminal L-methionyl-L-lysyl-[protein] + acetyl-CoA = N-terminal N(alpha)-acetyl-L-methionyl-L-lysyl-[protein] + CoA + H(+). It catalyses the reaction N-terminal L-methionyl-L-leucyl-[protein] + acetyl-CoA = N-terminal N(alpha)-acetyl-L-methionyl-L-leucyl-[protein] + CoA + H(+). It carries out the reaction N-terminal L-methionyl-L-phenylalanyl-[protein] + acetyl-CoA = N-terminal N(alpha)-acetyl-L-methionyl-L-phenylalanyl-[protein] + CoA + H(+). The catalysed reaction is N-terminal L-methionyl-L-tyrosyl-[protein] + acetyl-CoA = N-terminal N(alpha)-acetyl-L-methionyl-L-tyrosyl-[protein] + CoA + H(+). Functionally, N-alpha-acetyltransferase that acetylates the N-terminus of proteins that retain their initiating methionine. Has a broad substrate specificity: able to acetylate the initiator methionine of most peptides. Non-essential component of the NatA N-terminal acetyltransferase. This Saccharomyces cerevisiae (strain ATCC 204508 / S288c) (Baker's yeast) protein is N-alpha-acetyltransferase NAT5.